Consider the following 378-residue polypeptide: Anhydro-N-acetylmuramic acid kinase 2 (378 aa).

ATP is bound at residue 14-22 (GTVLDGNID).

It belongs to the anhydro-N-acetylmuramic acid kinase family.

The catalysed reaction is 1,6-anhydro-N-acetyl-beta-muramate + ATP + H2O = N-acetyl-D-muramate 6-phosphate + ADP + H(+). It functions in the pathway amino-sugar metabolism; 1,6-anhydro-N-acetylmuramate degradation. It participates in cell wall biogenesis; peptidoglycan recycling. Its function is as follows. Catalyzes the specific phosphorylation of 1,6-anhydro-N-acetylmuramic acid (anhMurNAc) with the simultaneous cleavage of the 1,6-anhydro ring, generating MurNAc-6-P. Is required for the utilization of anhMurNAc either imported from the medium or derived from its own cell wall murein, and thus plays a role in cell wall recycling. The sequence is that of Anhydro-N-acetylmuramic acid kinase 2 from Jannaschia sp. (strain CCS1).